Reading from the N-terminus, the 197-residue chain is Probable UbiX-like flavin prenyltransferase (197 aa).

Residues 9–11 (GAT), S36, 87–90 (SMKT), and R122 contribute to the FMN site.

The protein belongs to the UbiX/PAD1 family. YclB subfamily. Homododecamer.

It carries out the reaction dimethylallyl phosphate + FMNH2 = prenylated FMNH2 + phosphate. Its function is as follows. Involved in the non-oxidative decarboxylation and detoxification of phenolic derivatives under both aerobic and anaerobic conditions. Flavin prenyltransferase that catalyzes the synthesis of the prenylated FMN cofactor (prenyl-FMN) for phenolic acid decarboxylase. This is Probable UbiX-like flavin prenyltransferase from Escherichia coli O157:H7.